The following is a 325-amino-acid chain: ATP synthase gamma chain (325 aa).

It belongs to the ATPase gamma chain family. F-type ATPases have 2 components, CF(1) - the catalytic core - and CF(0) - the membrane proton channel. CF(1) has five subunits: alpha(3), beta(3), gamma(1), delta(1), epsilon(1). CF(0) has three main subunits: a, b and c.

The protein resides in the cell membrane. Its function is as follows. Produces ATP from ADP in the presence of a proton gradient across the membrane. The gamma chain is believed to be important in regulating ATPase activity and the flow of protons through the CF(0) complex. In Corynebacterium glutamicum (strain ATCC 13032 / DSM 20300 / JCM 1318 / BCRC 11384 / CCUG 27702 / LMG 3730 / NBRC 12168 / NCIMB 10025 / NRRL B-2784 / 534), this protein is ATP synthase gamma chain.